Consider the following 421-residue polypeptide: Inhibitor of growth protein 3 (421 aa).

A disordered region spans residues 129–164 (PSQPVNNHHAHSHTPVEKRKYNPTSHHTATDHIPEK). Residues Lys148, Lys165, and Lys167 each participate in a glycyl lysine isopeptide (Lys-Gly) (interchain with G-Cter in SUMO2) cross-link. Residue Lys181 is modified to N6-acetyllysine. Residue Lys256 forms a Glycyl lysine isopeptide (Lys-Gly) (interchain with G-Cter in SUMO2) linkage. Lys264 carries the N6-acetyllysine modification. The tract at residues 286 to 324 (TQNASSSAADSRSGRKSKNNTKSSSQQSSSSSSSSSSSS) is disordered. Over residues 308 to 324 (SSSQQSSSSSSSSSSSS) the composition is skewed to low complexity. The segment at 363–412 (PRYCICNQVSYGEMVGCDNQDCPIEWFHYGCVGLTEAPKGKWFCPQCTAA) adopts a PHD-type zinc-finger fold. Zn(2+) is bound by residues Cys366, Cys368, Cys379, Cys384, His390, Cys393, Cys406, and Cys409.

Belongs to the ING family. In terms of assembly, interacts with H3K4me3 and to a lesser extent with H3K4me2. Component of the NuA4 histone acetyltransferase complex which contains the catalytic subunit KAT5/TIP60 and the subunits EP400, TRRAP/PAF400, BRD8/SMAP, EPC1, DMAP1/DNMAP1, RUVBL1/TIP49, RUVBL2, ING3, actin, ACTL6A/BAF53A, MORF4L1/MRG15, MORF4L2/MRGX, MRGBP, YEATS4/GAS41, VPS72/YL1 and MEAF6. The NuA4 complex interacts with MYC. HTATTIP/TIP60, EPC1, and ING3 together constitute a minimal HAT complex termed Piccolo NuA4. Component of a SWR1-like complex.

Its subcellular location is the nucleus. Its function is as follows. Component of the NuA4 histone acetyltransferase (HAT) complex which is involved in transcriptional activation of select genes principally by acetylation of nucleosomal histones H4 and H2A. This modification may both alter nucleosome - DNA interactions and promote interaction of the modified histones with other proteins which positively regulate transcription. This complex may be required for the activation of transcriptional programs associated with oncogene and proto-oncogene mediated growth induction, tumor suppressor mediated growth arrest and replicative senescence, apoptosis, and DNA repair. NuA4 may also play a direct role in DNA repair when directly recruited to sites of DNA damage. Component of a SWR1-like complex that specifically mediates the removal of histone H2A.Z/H2AZ1 from the nucleosome. The polypeptide is Inhibitor of growth protein 3 (Ing3) (Rattus norvegicus (Rat)).